Reading from the N-terminus, the 225-residue chain is Ribonuclease 3 (225 aa).

One can recognise an RNase III domain in the interval 7–129; it reads IPRLCRTLGY…IIGAIYLDSD (123 aa). Position 42 (Glu-42) interacts with Mg(2+). Asp-46 is a catalytic residue. Mg(2+) is bound by residues Asp-115 and Glu-118. Residue Glu-118 is part of the active site. The DRBM domain occupies 155 to 225; it reads DPKTLLQEYL…AAQVLELIKK (71 aa).

Belongs to the ribonuclease III family. Homodimer. Mg(2+) is required as a cofactor.

It localises to the cytoplasm. It catalyses the reaction Endonucleolytic cleavage to 5'-phosphomonoester.. Its function is as follows. Digests double-stranded RNA. Involved in the processing of primary rRNA transcript to yield the immediate precursors to the large and small rRNAs (23S and 16S). Processes some mRNAs, and tRNAs when they are encoded in the rRNA operon. Processes pre-crRNA and tracrRNA of type II CRISPR loci if present in the organism. This chain is Ribonuclease 3, found in Shewanella pealeana (strain ATCC 700345 / ANG-SQ1).